The chain runs to 168 residues: Phosphopantetheine adenylyltransferase (168 aa).

Substrate is bound at residue S9. ATP is bound by residues 9–10 (SF) and H17. Positions 41, 73, and 87 each coordinate substrate. Residues 88–90 (GLR), E98, and 123–129 (YAFLSSS) contribute to the ATP site.

This sequence belongs to the bacterial CoaD family. As to quaternary structure, homohexamer. The cofactor is Mg(2+).

Its subcellular location is the cytoplasm. It catalyses the reaction (R)-4'-phosphopantetheine + ATP + H(+) = 3'-dephospho-CoA + diphosphate. The protein operates within cofactor biosynthesis; coenzyme A biosynthesis; CoA from (R)-pantothenate: step 4/5. In terms of biological role, reversibly transfers an adenylyl group from ATP to 4'-phosphopantetheine, yielding dephospho-CoA (dPCoA) and pyrophosphate. The protein is Phosphopantetheine adenylyltransferase of Heliobacterium modesticaldum (strain ATCC 51547 / Ice1).